We begin with the raw amino-acid sequence, 406 residues long: D-alanyl-D-alanine carboxypeptidase (406 aa).

A signal peptide spans 1-31; that stretch reads MVSGTVGRGTALGAVLLALLAVPAQAGTAAA. Serine 93 (acyl-ester intermediate) is an active-site residue. Residues 151-154, 190-192, arginine 316, 330-332, and 357-358 contribute to the substrate site; these read FAQT, YSN, TGT, and SN. The propeptide occupies 381 to 406; the sequence is AKLRSATSSATTVERHEDIAPGIARD. Residues 387-406 are disordered; that stretch reads TSSATTVERHEDIAPGIARD. Positions 393-406 are enriched in basic and acidic residues; sequence VERHEDIAPGIARD.

This sequence belongs to the peptidase S12 family.

Its subcellular location is the secreted. The catalysed reaction is Preferential cleavage: (Ac)2-L-Lys-D-Ala-|-D-Ala. Also transpeptidation of peptidyl-alanyl moieties that are N-acyl substituents of D-alanine.. It participates in cell wall biogenesis; peptidoglycan biosynthesis. Functionally, catalyzes distinct carboxypeptidation and transpeptidation reactions during the last stages of wall peptidoglycan synthesis. Mistaking a beta-lactam antibiotic molecule for a normal substrate (i.e. a D-alanyl-D-alanine-terminated peptide), it becomes immobilized in the form of a long-lived, serine-ester-linked acyl enzyme and thus behave as penicillin-binding protein (PBP). The chain is D-alanyl-D-alanine carboxypeptidase from Streptomyces sp. (strain R61).